We begin with the raw amino-acid sequence, 61 residues long: MARKALIEKAKRTPKFKVRAYTRCVRCGRARSVYRFFGLCRICLRELAHKGQLPGVRKASW.

Positions 24, 27, 40, and 43 each coordinate Zn(2+).

The protein belongs to the universal ribosomal protein uS14 family. Zinc-binding uS14 subfamily. As to quaternary structure, part of the 30S ribosomal subunit. Contacts proteins S3 and S10. The cofactor is Zn(2+).

Its function is as follows. Binds 16S rRNA, required for the assembly of 30S particles and may also be responsible for determining the conformation of the 16S rRNA at the A site. The chain is Small ribosomal subunit protein uS14 from Thermus thermophilus (strain ATCC BAA-163 / DSM 7039 / HB27).